The chain runs to 219 residues: Octanoyltransferase (219 aa).

One can recognise a BPL/LPL catalytic domain in the interval 32-207 (ASSPDQLWIV…TFSHNLGYQN (176 aa)). Substrate contacts are provided by residues 71–78 (RGGQVTYH), 138–140 (SLG), and 151–153 (GLA). Cysteine 169 functions as the Acyl-thioester intermediate in the catalytic mechanism.

Belongs to the LipB family.

It is found in the cytoplasm. The enzyme catalyses octanoyl-[ACP] + L-lysyl-[protein] = N(6)-octanoyl-L-lysyl-[protein] + holo-[ACP] + H(+). Its pathway is protein modification; protein lipoylation via endogenous pathway; protein N(6)-(lipoyl)lysine from octanoyl-[acyl-carrier-protein]: step 1/2. In terms of biological role, catalyzes the transfer of endogenously produced octanoic acid from octanoyl-acyl-carrier-protein onto the lipoyl domains of lipoate-dependent enzymes. Lipoyl-ACP can also act as a substrate although octanoyl-ACP is likely to be the physiological substrate. This chain is Octanoyltransferase, found in Shewanella sediminis (strain HAW-EB3).